Reading from the N-terminus, the 143-residue chain is Nucleoside diphosphate kinase (143 aa).

ATP is bound by residues lysine 11, phenylalanine 59, arginine 87, threonine 93, arginine 104, and asparagine 114. Histidine 117 serves as the catalytic Pros-phosphohistidine intermediate.

It belongs to the NDK family. In terms of assembly, homotetramer. Mg(2+) serves as cofactor.

It is found in the cytoplasm. The enzyme catalyses a 2'-deoxyribonucleoside 5'-diphosphate + ATP = a 2'-deoxyribonucleoside 5'-triphosphate + ADP. It catalyses the reaction a ribonucleoside 5'-diphosphate + ATP = a ribonucleoside 5'-triphosphate + ADP. Its function is as follows. Major role in the synthesis of nucleoside triphosphates other than ATP. The ATP gamma phosphate is transferred to the NDP beta phosphate via a ping-pong mechanism, using a phosphorylated active-site intermediate. This Pseudomonas aeruginosa (strain UCBPP-PA14) protein is Nucleoside diphosphate kinase.